Here is a 311-residue protein sequence, read N- to C-terminus: tRNA-cytidine(32) 2-sulfurtransferase (311 aa).

The short motif at 47–52 (SGGKDS) is the PP-loop motif element. The [4Fe-4S] cluster site is built by cysteine 122, cysteine 125, and cysteine 213.

Belongs to the TtcA family. In terms of assembly, homodimer. Mg(2+) is required as a cofactor. [4Fe-4S] cluster serves as cofactor.

It localises to the cytoplasm. It carries out the reaction cytidine(32) in tRNA + S-sulfanyl-L-cysteinyl-[cysteine desulfurase] + AH2 + ATP = 2-thiocytidine(32) in tRNA + L-cysteinyl-[cysteine desulfurase] + A + AMP + diphosphate + H(+). Its pathway is tRNA modification. Catalyzes the ATP-dependent 2-thiolation of cytidine in position 32 of tRNA, to form 2-thiocytidine (s(2)C32). The sulfur atoms are provided by the cysteine/cysteine desulfurase (IscS) system. This chain is tRNA-cytidine(32) 2-sulfurtransferase, found in Shigella boydii serotype 4 (strain Sb227).